Reading from the N-terminus, the 166-residue chain is MSEAIIAKKAELVDVVAGKMKAAASIVVVDARGLTVEQDTVLRRELRGSEVEYKVIKNSILRRAAEKAGLEDLASVFVGPSAVAFSNEDVIAPAKILNDFSKNAEALEIKGGAIEGAVASKEEILALATLPNREGLLSMLLSVLQAPVRNVALAVKAVAESKEDAA.

This sequence belongs to the universal ribosomal protein uL10 family. In terms of assembly, part of the ribosomal stalk of the 50S ribosomal subunit. The N-terminus interacts with L11 and the large rRNA to form the base of the stalk. The C-terminus forms an elongated spine to which L12 dimers bind in a sequential fashion forming a multimeric L10(L12)X complex.

Forms part of the ribosomal stalk, playing a central role in the interaction of the ribosome with GTP-bound translation factors. This chain is Large ribosomal subunit protein uL10, found in Streptococcus pneumoniae (strain 70585).